Reading from the N-terminus, the 597-residue chain is Elongation factor 4 (597 aa).

The tr-type G domain occupies 2–184 (DHIRNFSIIA…ALIAKVPPPK (183 aa)). GTP contacts are provided by residues 14 to 19 (DHGKST) and 131 to 134 (NKID).

This sequence belongs to the TRAFAC class translation factor GTPase superfamily. Classic translation factor GTPase family. LepA subfamily.

Its subcellular location is the cell inner membrane. The catalysed reaction is GTP + H2O = GDP + phosphate + H(+). Required for accurate and efficient protein synthesis under certain stress conditions. May act as a fidelity factor of the translation reaction, by catalyzing a one-codon backward translocation of tRNAs on improperly translocated ribosomes. Back-translocation proceeds from a post-translocation (POST) complex to a pre-translocation (PRE) complex, thus giving elongation factor G a second chance to translocate the tRNAs correctly. Binds to ribosomes in a GTP-dependent manner. This is Elongation factor 4 from Burkholderia multivorans (strain ATCC 17616 / 249).